The primary structure comprises 321 residues: Citrate synthase (321 aa).

Catalysis depends on residues His248 and Asp306.

This sequence belongs to the citrate synthase family.

It catalyses the reaction oxaloacetate + acetyl-CoA + H2O = citrate + CoA + H(+). The protein operates within carbohydrate metabolism; tricarboxylic acid cycle; isocitrate from oxaloacetate: step 1/2. The chain is Citrate synthase (gltA) from Bartonella elizabethae (Rochalimaea elizabethae).